The primary structure comprises 103 residues: Large ribosomal subunit protein uL24 (103 aa).

It belongs to the universal ribosomal protein uL24 family. In terms of assembly, part of the 50S ribosomal subunit.

In terms of biological role, one of two assembly initiator proteins, it binds directly to the 5'-end of the 23S rRNA, where it nucleates assembly of the 50S subunit. Functionally, one of the proteins that surrounds the polypeptide exit tunnel on the outside of the subunit. This is Large ribosomal subunit protein uL24 from Pediococcus pentosaceus (strain ATCC 25745 / CCUG 21536 / LMG 10740 / 183-1w).